We begin with the raw amino-acid sequence, 272 residues long: HMP-PP phosphatase (272 aa).

The Nucleophile role is filled by D8. Mg(2+)-binding residues include D8, D10, and D212.

This sequence belongs to the HAD-like hydrolase superfamily. Cof family. Mg(2+) serves as cofactor.

It carries out the reaction 4-amino-2-methyl-5-(diphosphooxymethyl)pyrimidine + H2O = 4-amino-2-methyl-5-(phosphooxymethyl)pyrimidine + phosphate + H(+). Its function is as follows. Catalyzes the hydrolysis of 4-amino-2-methyl-5-hydroxymethylpyrimidine pyrophosphate (HMP-PP) to 4-amino-2-methyl-5-hydroxymethylpyrimidine phosphate (HMP-P). The sequence is that of HMP-PP phosphatase from Escherichia coli O6:H1 (strain CFT073 / ATCC 700928 / UPEC).